The following is a 638-amino-acid chain: Poly(A)-specific ribonuclease PARN (638 aa).

Positions 28 and 30 each coordinate a divalent metal cation. Positions 143 to 165 are disordered; that stretch reads REQYDEKRSQSNGAGALSYTSPN. Positions 152–165 are enriched in polar residues; sequence QSNGAGALSYTSPN. Phosphoserine occurs at positions 163 and 167. Positions 178–245 constitute an R3H domain; the sequence is KKFIDQVVEK…ERYIVISKVD (68 aa). Lys220 bears the N6-acetyllysine mark. 2 residues coordinate a divalent metal cation: Asp292 and Asp382. The residue at position 499 (Lys499) is an N6-acetyllysine. Ser530 is subject to Phosphoserine. Phosphoserine; by MAPKAPK2 is present on Ser557. The segment at 573–638 is disordered; sequence RAEAGLEARA…AKLFEVPDTW (66 aa). A phosphoserine mark is found at Ser583 and Ser587. Over residues 606-615 the composition is skewed to basic residues; it reads KKAKKLKRMK. Phosphoserine is present on residues Ser619, Ser623, and Ser627.

The protein belongs to the CAF1 family. In terms of assembly, homodimer. Found in a mRNA decay complex with RENT1, RENT2 and RENT3B. Interacts with KHSRP. Interacts with CELF1/CUGBP1. Interacts with ZC3HAV1 in an RNA-independent manner. Interacts with DHX36. Mg(2+) is required as a cofactor. Post-translationally, phosphorylation by MAPKAPK2, preventing GADD45A mRNA degradation after genotoxic stress.

Its subcellular location is the nucleus. The protein resides in the cytoplasm. It is found in the nucleolus. The enzyme catalyses Exonucleolytic cleavage of poly(A) to 5'-AMP.. Its function is as follows. 3'-exoribonuclease that has a preference for poly(A) tails of mRNAs, thereby efficiently degrading poly(A) tails. Exonucleolytic degradation of the poly(A) tail is often the first step in the decay of eukaryotic mRNAs and is also used to silence certain maternal mRNAs translationally during oocyte maturation and early embryonic development. Involved in nonsense-mediated mRNA decay, a critical process of selective degradation of mRNAs that contain premature stop codons. Also involved in degradation of inherently unstable mRNAs that contain AU-rich elements (AREs) in their 3'-UTR, possibly via its interaction with KHSRP. Probably mediates the removal of poly(A) tails of AREs mRNAs, which constitutes the first step of destabilization. Interacts with both the 3'-end poly(A) tail and the 5'-end cap structure during degradation, the interaction with the cap structure being required for an efficient degradation of poly(A) tails. Also able to recognize poly(A) tails of microRNAs such as MIR21 and H/ACA box snoRNAs (small nucleolar RNAs) leading to microRNAs degradation or snoRNA increased stability. This Bos taurus (Bovine) protein is Poly(A)-specific ribonuclease PARN (PARN).